The chain runs to 345 residues: S-adenosylmethionine:tRNA ribosyltransferase-isomerase (345 aa).

This sequence belongs to the QueA family. As to quaternary structure, monomer.

The protein localises to the cytoplasm. The catalysed reaction is 7-aminomethyl-7-carbaguanosine(34) in tRNA + S-adenosyl-L-methionine = epoxyqueuosine(34) in tRNA + adenine + L-methionine + 2 H(+). It functions in the pathway tRNA modification; tRNA-queuosine biosynthesis. Functionally, transfers and isomerizes the ribose moiety from AdoMet to the 7-aminomethyl group of 7-deazaguanine (preQ1-tRNA) to give epoxyqueuosine (oQ-tRNA). The polypeptide is S-adenosylmethionine:tRNA ribosyltransferase-isomerase (Acinetobacter baumannii (strain ATCC 17978 / DSM 105126 / CIP 53.77 / LMG 1025 / NCDC KC755 / 5377)).